We begin with the raw amino-acid sequence, 997 residues long: Kinesin-like protein KIF19 (997 aa).

A Kinesin motor domain is found at 11–346; the sequence is QLTVALRIRP…LTYADRAKNI (336 aa). 104 to 111 provides a ligand contact to ATP; sequence GPTGCGKT. A coiled-coil region spans residues 360–437; sequence HIAQYTSIIS…REQMDIRRQL (78 aa). The segment covering 468–491 has biased composition (basic and acidic residues); the sequence is RARKWRDEHRKETYGKDDSEKDSD. Residues 468-503 are disordered; it reads RARKWRDEHRKETYGKDDSEKDSDTGDDQSDFIEPP. A coiled-coil region spans residues 508 to 577; that stretch reads ARETIQILEG…ELEIENTEMQ (70 aa). Disordered stretches follow at residues 662–690, 792–811, and 848–890; these read NLTAEENLQEPDSDQESVRTFGSDNRNPI, GDRLQPMKERSNLSVHSMSE, and GGGS…SRSF. 2 stretches are compositionally biased toward basic and acidic residues: residues 792–802 and 869–880; these read GDRLQPMKERS and QKLEKREESLEV. The stretch at 861–889 forms a coiled coil; sequence HRTQKKQAQKLEKREESLEVKRRKKRSRS.

Belongs to the TRAFAC class myosin-kinesin ATPase superfamily. Kinesin family.

Its subcellular location is the cytoplasm. The protein localises to the cytoskeleton. It localises to the cell projection. It is found in the cilium. Plus end-directed microtubule-dependent motor protein that regulates the length of motile cilia by mediating depolymerization of microtubules at ciliary tips. The chain is Kinesin-like protein KIF19 (kif19) from Xenopus laevis (African clawed frog).